The following is a 290-amino-acid chain: Elongation factor Ts (290 aa).

The interval 81–84 (TDFV) is involved in Mg(2+) ion dislocation from EF-Tu.

The protein belongs to the EF-Ts family.

The protein resides in the cytoplasm. In terms of biological role, associates with the EF-Tu.GDP complex and induces the exchange of GDP to GTP. It remains bound to the aminoacyl-tRNA.EF-Tu.GTP complex up to the GTP hydrolysis stage on the ribosome. The chain is Elongation factor Ts from Saccharophagus degradans (strain 2-40 / ATCC 43961 / DSM 17024).